Here is a 364-residue protein sequence, read N- to C-terminus: tRNA-specific 2-thiouridylase MnmA 2 (364 aa).

ATP is bound by residues Gly10–Ser17 and Met36. The Nucleophile role is filled by Cys106. Cysteines 106 and 204 form a disulfide. ATP is bound at residue Gly130. The segment at Lys154–Gln156 is interaction with tRNA. Cys204 functions as the Cysteine persulfide intermediate in the catalytic mechanism. The interval Arg310 to Tyr311 is interaction with tRNA.

It belongs to the MnmA/TRMU family.

Its subcellular location is the cytoplasm. The enzyme catalyses S-sulfanyl-L-cysteinyl-[protein] + uridine(34) in tRNA + AH2 + ATP = 2-thiouridine(34) in tRNA + L-cysteinyl-[protein] + A + AMP + diphosphate + H(+). In terms of biological role, catalyzes the 2-thiolation of uridine at the wobble position (U34) of tRNA, leading to the formation of s(2)U34. This Caldanaerobacter subterraneus subsp. tengcongensis (strain DSM 15242 / JCM 11007 / NBRC 100824 / MB4) (Thermoanaerobacter tengcongensis) protein is tRNA-specific 2-thiouridylase MnmA 2.